Reading from the N-terminus, the 290-residue chain is Endoplasmic reticulum-Golgi intermediate compartment protein 1 (290 aa).

Residues 1 to 26 (MPFDFRRFDIYRKVPKDLTQPTYTGA) lie on the Cytoplasmic side of the membrane. A helical transmembrane segment spans residues 27-47 (IISICCCLFILFLFLSELTGF). The Lumenal portion of the chain corresponds to 48-254 (ITTEVVNELY…RRQPLYRFIT (207 aa)). An N-linked (GlcNAc...) asparagine glycan is attached at asparagine 74. The chain crosses the membrane as a helical span at residues 255-275 (TICAIIGGTFTVAGILDSCIF). Residues 276–290 (TASEAWKKIQLGKIH) lie on the Cytoplasmic side of the membrane.

It belongs to the ERGIC family. In terms of assembly, may form a heteromeric complex composed of ERGIC1, ERGIC2 and ERGIC3. Within the complex, the interaction with ERGIC3 is direct. Interacts with ERGIC3/ERV46. Post-translationally, N-glycosylated.

It localises to the endoplasmic reticulum membrane. The protein localises to the endoplasmic reticulum-Golgi intermediate compartment membrane. The protein resides in the golgi apparatus membrane. Its function is as follows. Possible role in transport between endoplasmic reticulum and Golgi. This is Endoplasmic reticulum-Golgi intermediate compartment protein 1 (Ergic1) from Mus musculus (Mouse).